Consider the following 708-residue polypeptide: Leukotoxin translocation ATP-binding protein LktB (708 aa).

The Peptidase C39 domain maps to 1-126 (MEVNHQSNDL…SCYQGKIILV (126 aa)). One can recognise an ABC transmembrane type-1 domain in the interval 155–437 (FLETLLVSIF…LAQLWQDFTQ (283 aa)). The next 5 helical transmembrane spans lie at 159-179 (LLVS…FQVV), 192-212 (LNII…LSGL), 270-290 (ALTS…MWYY), 296-316 (LVIL…SPIL), and 389-409 (VMVI…LSIG). Residues 469–704 (IAFKNIRFRY…NNGLYSYLHQ (236 aa)) enclose the ABC transporter domain. 503-510 (GRSGSGKS) is a binding site for ATP.

It belongs to the ABC transporter superfamily. Protein-1 exporter (TC 3.A.1.109) family. Homodimer.

The protein localises to the cell inner membrane. It catalyses the reaction ATP + H2O + proteinSide 1 = ADP + phosphate + proteinSide 2.. Its function is as follows. Part of the ABC transporter complex LktBD involved in leukotoxin export. Transmembrane domains (TMD) form a pore in the inner membrane and the ATP-binding domain (NBD) is responsible for energy generation. In Pasteurella haemolytica-like sp. (strain 5943B), this protein is Leukotoxin translocation ATP-binding protein LktB (lktB).